Consider the following 196-residue polypeptide: GTP cyclohydrolase-2 (196 aa).

49 to 53 is a GTP binding site; sequence RVHSE. Zn(2+)-binding residues include cysteine 54, cysteine 65, and cysteine 67. GTP contacts are provided by residues glutamine 70, 92-94, and threonine 114; that span reads EGR. Aspartate 126 serves as the catalytic Proton acceptor. Arginine 128 acts as the Nucleophile in catalysis. 2 residues coordinate GTP: threonine 149 and lysine 154.

This sequence belongs to the GTP cyclohydrolase II family. Homodimer. The cofactor is Zn(2+).

It catalyses the reaction GTP + 4 H2O = 2,5-diamino-6-hydroxy-4-(5-phosphoribosylamino)-pyrimidine + formate + 2 phosphate + 3 H(+). Its pathway is cofactor biosynthesis; riboflavin biosynthesis; 5-amino-6-(D-ribitylamino)uracil from GTP: step 1/4. Its function is as follows. Catalyzes the conversion of GTP to 2,5-diamino-6-ribosylamino-4(3H)-pyrimidinone 5'-phosphate (DARP), formate and pyrophosphate. The protein is GTP cyclohydrolase-2 of Shigella dysenteriae serotype 1 (strain Sd197).